We begin with the raw amino-acid sequence, 86 residues long: Putative membrane protein insertion efficiency factor (86 aa).

The protein belongs to the UPF0161 family.

It is found in the cell inner membrane. Could be involved in insertion of integral membrane proteins into the membrane. This chain is Putative membrane protein insertion efficiency factor, found in Histophilus somni (strain 129Pt) (Haemophilus somnus).